Reading from the N-terminus, the 95-residue chain is MTTISTDQVAAIARLARLAPDEAQLATFARQFGDILGYMEMLNGLDTTGVEPLYSPVQHATALRSDETAPRCTREDVLRNAPEADSEFFIVPRIV.

Belongs to the GatC family. In terms of assembly, heterotrimer of A, B and C subunits.

It carries out the reaction L-glutamyl-tRNA(Gln) + L-glutamine + ATP + H2O = L-glutaminyl-tRNA(Gln) + L-glutamate + ADP + phosphate + H(+). It catalyses the reaction L-aspartyl-tRNA(Asn) + L-glutamine + ATP + H2O = L-asparaginyl-tRNA(Asn) + L-glutamate + ADP + phosphate + 2 H(+). In terms of biological role, allows the formation of correctly charged Asn-tRNA(Asn) or Gln-tRNA(Gln) through the transamidation of misacylated Asp-tRNA(Asn) or Glu-tRNA(Gln) in organisms which lack either or both of asparaginyl-tRNA or glutaminyl-tRNA synthetases. The reaction takes place in the presence of glutamine and ATP through an activated phospho-Asp-tRNA(Asn) or phospho-Glu-tRNA(Gln). The protein is Aspartyl/glutamyl-tRNA(Asn/Gln) amidotransferase subunit C of Nitratidesulfovibrio vulgaris (strain DSM 19637 / Miyazaki F) (Desulfovibrio vulgaris).